Reading from the N-terminus, the 147-residue chain is Large ribosomal subunit protein uL15 (147 aa).

Residues 16–63 (SSRARVGRGIGSGLGKTAGRGHKGSFARKGGGKIKPGFEGGQTPMQRR) form a disordered region. The segment covering 23 to 33 (RGIGSGLGKTA) has biased composition (gly residues). The span at 34–47 (GRGHKGSFARKGGG) shows a compositional bias: basic residues.

Belongs to the universal ribosomal protein uL15 family. Part of the 50S ribosomal subunit.

Functionally, binds to the 23S rRNA. In Xylella fastidiosa (strain Temecula1 / ATCC 700964), this protein is Large ribosomal subunit protein uL15.